A 100-amino-acid chain; its full sequence is ATP-dependent Clp protease adapter protein ClpS (100 aa).

This sequence belongs to the ClpS family. As to quaternary structure, binds to the N-terminal domain of the chaperone ClpA.

Its function is as follows. Involved in the modulation of the specificity of the ClpAP-mediated ATP-dependent protein degradation. This Neisseria meningitidis serogroup B (strain ATCC BAA-335 / MC58) protein is ATP-dependent Clp protease adapter protein ClpS.